Consider the following 79-residue polypeptide: Cell division protein ZapB (79 aa).

Residues 4–78 adopt a coiled-coil conformation; that stretch reads EVFEKLEAKV…LRALLGKMEE (75 aa).

Belongs to the ZapB family. As to quaternary structure, homodimer. The ends of the coiled-coil dimer bind to each other, forming polymers. Interacts with FtsZ.

The protein resides in the cytoplasm. In terms of biological role, non-essential, abundant cell division factor that is required for proper Z-ring formation. It is recruited early to the divisome by direct interaction with FtsZ, stimulating Z-ring assembly and thereby promoting cell division earlier in the cell cycle. Its recruitment to the Z-ring requires functional FtsA or ZipA. The polypeptide is Cell division protein ZapB (Erwinia tasmaniensis (strain DSM 17950 / CFBP 7177 / CIP 109463 / NCPPB 4357 / Et1/99)).